A 380-amino-acid polypeptide reads, in one-letter code: Mitogen-activated protein kinase 3 (380 aa).

Alanine 2 carries the N-acetylalanine modification. The 289-residue stretch at 43-331 (YTQLQYIGEG…VEEALAHPYL (289 aa)) folds into the Protein kinase domain. Residues 49-57 (IGEGAYGMV) and lysine 72 contribute to the ATP site. The active-site Proton acceptor is the aspartate 167. At threonine 199 the chain carries Phosphothreonine. Threonine 203 bears the Phosphothreonine; by MAP2K1 and MAP2K2 mark. The TXY motif lies at 203–205 (TEY). Tyrosine 205 is subject to Phosphotyrosine; by MAP2K1 and MAP2K2. Phosphothreonine; by autocatalysis is present on threonine 208.

Belongs to the protein kinase superfamily. CMGC Ser/Thr protein kinase family. MAP kinase subfamily. Binds both upstream activators and downstream substrates in multimolecular complexes. Found in a complex with at least BRAF, HRAS, MAP2K1/MEK1, MAPK3 and RGS14. Interacts with TPR. Interacts with ADAM15, ARRB2, CANX, DAPK1 (via death domain), HSF4, IER3, MAP2K1/MEK1, NISCH, and SGK1. Interacts with MORG1. Interacts with PEA15. Interacts with isoform 1 of MKNK2 and this binding prevents from dephosphorylation and inactivation. Interacts with CDKN2AIP. Interacts with HSF1 (via D domain and preferentially with hyperphosphorylated form); this interaction occurs upon heat shock. Interacts with CAVIN4. Interacts with GIT1; this interaction is necessary for MAPK3 localization to focal adhesions. Interacts with ZNF263. Interacts with EBF4. Mg(2+) serves as cofactor. Dually phosphorylated on Thr-203 and Tyr-205, which activates the enzyme. Ligand-activated ALK induces tyrosine phosphorylation. Dephosphorylated by PTPRJ at Tyr-205. Autophosphorylated on threonine and tyrosine residues in vitro. Phosphorylated upon FLT3 and KIT signaling. Post-translationally, ubiquitinated by TRIM15 via 'Lys-63'-linked ubiquitination; leading to activation. Deubiquitinated by CYLD.

The protein localises to the cytoplasm. Its subcellular location is the nucleus. It localises to the membrane. It is found in the caveola. The protein resides in the cell junction. The protein localises to the focal adhesion. The catalysed reaction is L-seryl-[protein] + ATP = O-phospho-L-seryl-[protein] + ADP + H(+). It carries out the reaction L-threonyl-[protein] + ATP = O-phospho-L-threonyl-[protein] + ADP + H(+). Phosphorylated by MAP2K1/MEK1 and MAP2K2/MEK2 on Thr-203 and Tyr-205 in response to external stimuli like insulin or NGF. Both phosphorylations are required for activity. This phosphorylation causes dramatic conformational changes, which enable full activation and interaction of MAPK1/ERK2 with its substrates. Dephosphorylated and inactivated by DUSP3, DUSP6 and DUSP9. Serine/threonine kinase which acts as an essential component of the MAP kinase signal transduction pathway. MAPK1/ERK2 and MAPK3/ERK1 are the 2 MAPKs which play an important role in the MAPK/ERK cascade. They participate also in a signaling cascade initiated by activated KIT and KITLG/SCF. Depending on the cellular context, the MAPK/ERK cascade mediates diverse biological functions such as cell growth, adhesion, survival and differentiation through the regulation of transcription, translation, cytoskeletal rearrangements. The MAPK/ERK cascade also plays a role in initiation and regulation of meiosis, mitosis, and postmitotic functions in differentiated cells by phosphorylating a number of transcription factors. About 160 substrates have already been discovered for ERKs. Many of these substrates are localized in the nucleus, and seem to participate in the regulation of transcription upon stimulation. However, other substrates are found in the cytosol as well as in other cellular organelles, and those are responsible for processes such as translation, mitosis and apoptosis. Moreover, the MAPK/ERK cascade is also involved in the regulation of the endosomal dynamics, including lysosome processing and endosome cycling through the perinuclear recycling compartment (PNRC); as well as in the fragmentation of the Golgi apparatus during mitosis. The substrates include transcription factors (such as ATF2, BCL6, ELK1, ERF, FOS, HSF4 or SPZ1), cytoskeletal elements (such as CANX, CTTN, GJA1, MAP2, MAPT, PXN, SORBS3 or STMN1), regulators of apoptosis (such as BAD, BTG2, CASP9, DAPK1, IER3, MCL1 or PPARG), regulators of translation (such as EIF4EBP1) and a variety of other signaling-related molecules (like ARHGEF2, DEPTOR, FRS2 or GRB10). Protein kinases (such as RAF1, RPS6KA1/RSK1, RPS6KA3/RSK2, RPS6KA2/RSK3, RPS6KA6/RSK4, SYK, MKNK1/MNK1, MKNK2/MNK2, RPS6KA5/MSK1, RPS6KA4/MSK2, MAPKAPK3 or MAPKAPK5) and phosphatases (such as DUSP1, DUSP4, DUSP6 or DUSP16) are other substrates which enable the propagation the MAPK/ERK signal to additional cytosolic and nuclear targets, thereby extending the specificity of the cascade. This chain is Mitogen-activated protein kinase 3 (Mapk3), found in Mus musculus (Mouse).